Reading from the N-terminus, the 329-residue chain is Prostaglandin reductase 1 (329 aa).

Thr-18 carries the phosphothreonine modification. Ser-20 is subject to Phosphoserine. Residues Gly-152–Gly-155, Lys-178, Tyr-193, Asn-217, Cys-239–Tyr-245, Phe-270–Val-272, and Asn-321 each bind NADP(+). N6-(2-hydroxyisobutyryl)lysine; alternate is present on Lys-178. The residue at position 178 (Lys-178) is an N6-acetyllysine; alternate.

It belongs to the NADP-dependent oxidoreductase L4BD family. As to quaternary structure, monomer or homodimer.

It localises to the cytoplasm. It carries out the reaction 13,14-dihydro-15-oxo-prostaglandin E1 + NADP(+) = 15-oxoprostaglandin E1 + NADPH + H(+). It catalyses the reaction 13,14-dihydro-15-oxo-prostaglandin E2 + NADP(+) = 15-oxoprostaglandin E2 + NADPH + H(+). The enzyme catalyses 13,14-dihydro-15-oxo-prostaglandin F1alpha + NADP(+) = 15-oxoprostaglandin F1alpha + NADPH + H(+). The catalysed reaction is 13,14-dihydro-15-oxo-PGF2alpha + NADP(+) = 15-oxoprostaglandin F2alpha + NADPH + H(+). It carries out the reaction leukotriene B4 + NADP(+) = 12-oxo-leukotriene B4 + NADPH + H(+). It catalyses the reaction 20-hydroxy-leukotriene B4 + NADP(+) = 12-oxo-20-hydroxy-leukotriene B4 + NADPH + H(+). The enzyme catalyses 6-trans-leukotriene B4 + NADP(+) = 12-oxo-(5S)-hydroxy-(6E,8E,10E,14Z)-eicosatetraenoate + NADPH + H(+). The catalysed reaction is (5S,12S)-dihydroxy-(6E,10E,12E,14Z)-eicosatetraenoate + NADP(+) = 12-oxo-(5S)-hydroxy-(6E,8E,10E,14Z)-eicosatetraenoate + NADPH + H(+). It carries out the reaction an n-alkanal + NADP(+) = an alk-2-enal + NADPH + H(+). It catalyses the reaction hexanal + NADP(+) = (E)-hex-2-enal + NADPH + H(+). The enzyme catalyses octanal + NADP(+) = (2E)-octenal + NADPH + H(+). The catalysed reaction is decanal + NADP(+) = (2E)-decenal + NADPH + H(+). It carries out the reaction dodecanal + NADP(+) = (2E)-dodecenal + NADPH + H(+). It catalyses the reaction 4-hydroxynonanal + NADP(+) = (E)-4-hydroxynon-2-enal + NADPH + H(+). The enzyme catalyses pentan-2-one + NADP(+) = (E)-pent-3-en-2-one + NADPH + H(+). The catalysed reaction is nonan-2-one + NADP(+) = (3E)-nonen-2-one + NADPH + H(+). NAD(P)H-dependent oxidoreductase involved in metabolic inactivation of pro- and anti-inflammatory eicosanoids: prostaglandins (PG), leukotrienes (LT) and lipoxins (LX). Catalyzes with high efficiency the reduction of the 13,14 double bond of 15-oxoPGs, including 15-oxo-PGE1, 15-oxo-PGE2, 15-oxo-PGF1-alpha and 15-oxo-PGF2-alpha. Catalyzes with lower efficiency the oxidation of the hydroxyl group at C12 of LTB4 and its derivatives, converting them into biologically less active 12-oxo-LTB4 metabolites. Reduces 15-oxo-LXA4 to 13,14 dihydro-15-oxo-LXA4, enhancing neutrophil recruitment at the inflammatory site. Plays a role in metabolic detoxification of alkenals and ketones. Reduces alpha,beta-unsaturated alkenals and ketones, particularly those with medium-chain length, showing highest affinity toward (2E)-decenal and (3E)-3-nonen-2-one. May inactivate 4-hydroxy-2-nonenal, a cytotoxic lipid constituent of oxidized low-density lipoprotein particles. The sequence is that of Prostaglandin reductase 1 (PTGR1) from Bos taurus (Bovine).